Reading from the N-terminus, the 200-residue chain is Rho GDP-dissociation inhibitor 2 (200 aa).

Residues 1-40 are disordered; it reads MTEKAPEPHVEEDDDELDGKLNYKPPPQKSLKELQEMDKD. Threonine 2 bears the N-acetylthreonine mark. Lysine 20 carries the N6-acetyllysine modification. Residue tyrosine 23 is modified to Phosphotyrosine. N6-acetyllysine occurs at positions 24, 39, 46, 101, and 123. The segment covering 30 to 40 has biased composition (basic and acidic residues); the sequence is SLKELQEMDKD. Serine 144 carries the post-translational modification Phosphoserine. Lysine 174 carries the N6-acetyllysine modification.

Belongs to the Rho GDI family. Interacts with RHOA. Interacts with RAC1. Interacts with RAC2. Interacts with CDC42.

It localises to the cytoplasm. It is found in the cytosol. Regulates the GDP/GTP exchange reaction of the Rho proteins by inhibiting the dissociation of GDP from them, and the subsequent binding of GTP to them. Regulates reorganization of the actin cytoskeleton mediated by Rho family members. The polypeptide is Rho GDP-dissociation inhibitor 2 (ARHGDIB) (Bos taurus (Bovine)).